We begin with the raw amino-acid sequence, 211 residues long: tRNA (guanine-N(7)-)-methyltransferase (211 aa).

Residues Glu43, Asp68, and Asn117 each coordinate S-adenosyl-L-methionine. Substrate-binding positions include Lys121, Asp153, and 190–193; that span reads TEYE.

This sequence belongs to the class I-like SAM-binding methyltransferase superfamily. TrmB family.

It carries out the reaction guanosine(46) in tRNA + S-adenosyl-L-methionine = N(7)-methylguanosine(46) in tRNA + S-adenosyl-L-homocysteine. The protein operates within tRNA modification; N(7)-methylguanine-tRNA biosynthesis. In terms of biological role, catalyzes the formation of N(7)-methylguanine at position 46 (m7G46) in tRNA. The protein is tRNA (guanine-N(7)-)-methyltransferase of Clostridium acetobutylicum (strain ATCC 824 / DSM 792 / JCM 1419 / IAM 19013 / LMG 5710 / NBRC 13948 / NRRL B-527 / VKM B-1787 / 2291 / W).